A 183-amino-acid chain; its full sequence is Bifunctional protein PyrR (183 aa).

Residues Thr-42 to Arg-43, Arg-87, Asp-104 to Thr-112, Arg-137, and Val-161 contribute to the substrate site. Positions Val-100 to Thr-112 match the PRPP-binding motif.

The protein belongs to the purine/pyrimidine phosphoribosyltransferase family. PyrR subfamily.

It catalyses the reaction UMP + diphosphate = 5-phospho-alpha-D-ribose 1-diphosphate + uracil. Regulates the transcription of the pyrimidine nucleotide (pyr) operon in response to exogenous pyrimidines. Functionally, also displays a weak uracil phosphoribosyltransferase activity which is not physiologically significant. This chain is Bifunctional protein PyrR, found in Deinococcus radiodurans (strain ATCC 13939 / DSM 20539 / JCM 16871 / CCUG 27074 / LMG 4051 / NBRC 15346 / NCIMB 9279 / VKM B-1422 / R1).